A 309-amino-acid chain; its full sequence is Homoserine O-succinyltransferase (309 aa).

The active-site Acyl-thioester intermediate is the Cys-142. Substrate contacts are provided by Lys-163 and Ser-192. Catalysis depends on His-235, which acts as the Proton acceptor. Residue Glu-237 is part of the active site. Arg-249 serves as a coordination point for substrate.

It belongs to the MetA family.

It localises to the cytoplasm. The catalysed reaction is L-homoserine + succinyl-CoA = O-succinyl-L-homoserine + CoA. Its pathway is amino-acid biosynthesis; L-methionine biosynthesis via de novo pathway; O-succinyl-L-homoserine from L-homoserine: step 1/1. Transfers a succinyl group from succinyl-CoA to L-homoserine, forming succinyl-L-homoserine. In Edwardsiella ictaluri (strain 93-146), this protein is Homoserine O-succinyltransferase.